Consider the following 90-residue polypeptide: RNA-binding protein Hfq (90 aa).

Residues 9–68 enclose the Sm domain; it reads DPFLNALRRERVPVSIYLVNGIKLQGQVESFDQFVILLKNTVSQMVYKHAISTVVPARPF. The interval 71–90 is disordered; that stretch reads TGHQNAQGGYGPQDDVPSGE.

It belongs to the Hfq family. As to quaternary structure, homohexamer.

Functionally, RNA chaperone that binds small regulatory RNA (sRNAs) and mRNAs to facilitate mRNA translational regulation in response to envelope stress, environmental stress and changes in metabolite concentrations. Also binds with high specificity to tRNAs. The sequence is that of RNA-binding protein Hfq from Shewanella putrefaciens (strain CN-32 / ATCC BAA-453).